The following is a 539-amino-acid chain: Eukaryotic translation initiation factor 3 subunit L (539 aa).

One can recognise a PCI domain in the interval 306-514 (TFSDILLYIQ…IHIADTKVSH (209 aa)).

The protein belongs to the eIF-3 subunit L family. In terms of assembly, component of the eukaryotic translation initiation factor 3 (eIF-3) complex. The eIF-3 complex interacts with pix.

It localises to the cytoplasm. Its function is as follows. Component of the eukaryotic translation initiation factor 3 (eIF-3) complex, which is involved in protein synthesis of a specialized repertoire of mRNAs and, together with other initiation factors, stimulates binding of mRNA and methionyl-tRNAi to the 40S ribosome. The eIF-3 complex specifically targets and initiates translation of a subset of mRNAs involved in cell proliferation. In Drosophila ananassae (Fruit fly), this protein is Eukaryotic translation initiation factor 3 subunit L.